A 426-amino-acid chain; its full sequence is Phosphoribosylamine--glycine ligase (426 aa).

Residues 113-320 (KSLMTEAKIP…LLELLYRAST (208 aa)) enclose the ATP-grasp domain. 139–200 (LESKSIPIVI…EEFMEGQEAS (62 aa)) contacts ATP. The Mg(2+) site is built by glutamate 290 and asparagine 292.

This sequence belongs to the GARS family. Mg(2+) serves as cofactor. It depends on Mn(2+) as a cofactor.

The enzyme catalyses 5-phospho-beta-D-ribosylamine + glycine + ATP = N(1)-(5-phospho-beta-D-ribosyl)glycinamide + ADP + phosphate + H(+). It functions in the pathway purine metabolism; IMP biosynthesis via de novo pathway; N(1)-(5-phospho-D-ribosyl)glycinamide from 5-phospho-alpha-D-ribose 1-diphosphate: step 2/2. The chain is Phosphoribosylamine--glycine ligase from Leptospira interrogans serogroup Icterohaemorrhagiae serovar copenhageni (strain Fiocruz L1-130).